Consider the following 74-residue polypeptide: Tau-AnmTx Ueq 12-1 (74 aa).

The signal sequence occupies residues 1 to 18; it reads MCLLMLVLGAMYVQGWHS. A propeptide spans 19-27 (removed in mature form); sequence AGFGKRTLK. Cystine bridges form between Cys30/Cys37, Cys40/Cys71, Cys46/Cys64, Cys51/Cys72, and Cys58/Cys73.

This sequence belongs to the Cnidaria small cysteine-rich protein (SCRiP) family. In terms of tissue distribution, detected in mucus secreted from ectoderm.

Its subcellular location is the secreted. In terms of biological role, potentiates activation of mammalian TRPA1, a non-selective cation channel involved in perception of pain, in vitro yet has an analgesic and anti-inflammatory effect in vivo. Has antibacterial activity against C.glutamicum (MIC=50 uM) and, to a lesser extent, against S.aureus but not against P.aeruginosa or E.coli. The sequence is that of Tau-AnmTx Ueq 12-1 from Urticina eques (Sea anemone).